The primary structure comprises 148 residues: MGFTDKQEALVNSSSEFKQNLPGYSILFYTIVLEKAPAAKGLFSFLKDTAGVEDSPKLQAHAEQVFGLVRDSAAQLRTKGEVVLGNATLGAIHVQKGVTNPHFVVVKEALLQTIKKASGNNWSEELNTAWEVAYDGLATAIKKAMKTA.

A Globin domain is found at 2-146; sequence GFTDKQEALV…LATAIKKAMK (145 aa). A nitrated tyrosine mark is found at tyrosine 24 and tyrosine 29. Serine 44 serves as a coordination point for heme b. Serine 44 bears the Phosphoserine mark. Histidine 61 lines the O2 pocket. Positions 93 and 96 each coordinate heme b. Tyrosine 134 is subject to Nitrated tyrosine.

Belongs to the plant globin family. Monomer. Post-translationally, nitrated in effective nodules and particularly in hypoxic conditions; this mechanism may play a protective role in the symbiosis by buffering toxic peroxynitrite NO(2)(-). Nitration level decrease during nodule senescence. In terms of processing, phosphorylation at Ser-44 disrupts the molecular environment of its porphyrin ring oxygen binding pocket, thus leading to a reduced oxygen consumption and to the delivery of oxygen O(2) to symbiosomes. As to expression, root nodules.

The protein localises to the cytoplasm. The protein resides in the cytosol. It is found in the nucleus. Its function is as follows. Leghemoglobin that reversibly binds oxygen O(2) through a pentacoordinated heme iron. In root nodules, facilitates the diffusion of oxygen to the bacteroids while preventing the bacterial nitrogenase from being inactivated by buffering dioxygen, nitric oxide and carbon monoxide, and promoting the formation of reactive oxygen species (ROS, e.g. H(2)O(2)). This role is essential for symbiotic nitrogen fixation (SNF). The protein is Leghemoglobin-1 of Pisum sativum (Garden pea).